A 406-amino-acid polypeptide reads, in one-letter code: Phosphorylase b kinase gamma catalytic chain, liver/testis isoform (406 aa).

The 268-residue stretch at 24–291 (YDPKDIIGRG…AEQALQHPFF (268 aa)) folds into the Protein kinase domain. ATP is bound by residues 30 to 38 (IGRGVSSVV) and lysine 53. The active-site Proton acceptor is aspartate 153. A calmodulin-binding (domain-N) region spans residues 306–330 (QRFRVAVWTILAAGRVALSSHRLRP). The calmodulin-binding (domain-C) stretch occupies residues 346–370 (VRRLIDNCAFRLYGHWVKKGEQQNR).

The protein belongs to the protein kinase superfamily. CAMK Ser/Thr protein kinase family. As to quaternary structure, hexadecamer of 4 heterotetramers, each composed of alpha, beta, gamma, and delta subunits. Alpha (PHKA1 or PHKA2) and beta (PHKB) are regulatory subunits, gamma (PHKG1 or PHKG2) is the catalytic subunit, and delta is calmodulin.

It carries out the reaction 2 ATP + phosphorylase b = 2 ADP + phosphorylase a.. In terms of biological role, catalytic subunit of the phosphorylase b kinase (PHK), which mediates the neural and hormonal regulation of glycogen breakdown (glycogenolysis) by phosphorylating and thereby activating glycogen phosphorylase. May regulate glycogeneolysis in the testis. In vitro, phosphorylates PYGM. The chain is Phosphorylase b kinase gamma catalytic chain, liver/testis isoform (Phkg2) from Mus musculus (Mouse).